Here is a 310-residue protein sequence, read N- to C-terminus: Ribosomal RNA large subunit methyltransferase F (310 aa).

Belongs to the methyltransferase superfamily. METTL16/RlmF family.

Its subcellular location is the cytoplasm. The catalysed reaction is adenosine(1618) in 23S rRNA + S-adenosyl-L-methionine = N(6)-methyladenosine(1618) in 23S rRNA + S-adenosyl-L-homocysteine + H(+). In terms of biological role, specifically methylates the adenine in position 1618 of 23S rRNA. This chain is Ribosomal RNA large subunit methyltransferase F, found in Psychromonas ingrahamii (strain DSM 17664 / CCUG 51855 / 37).